Consider the following 466-residue polypeptide: Ribulose bisphosphate carboxylase large chain (466 aa).

Residue Lys5 is modified to N6,N6,N6-trimethyllysine. Substrate is bound by residues Asn114 and Thr164. Lys166 (proton acceptor) is an active-site residue. Residue Lys168 coordinates substrate. Mg(2+)-binding residues include Lys192, Asp194, and Glu195. Lys192 is modified (N6-carboxylysine). His285 (proton acceptor) is an active-site residue. Residues Arg286, His318, and Ser370 each coordinate substrate.

The protein belongs to the RuBisCO large chain family. Type I subfamily. In terms of assembly, heterohexadecamer of 8 large chains and 8 small chains. Mg(2+) is required as a cofactor.

The protein resides in the plastid. It is found in the chloroplast. It carries out the reaction 2 (2R)-3-phosphoglycerate + 2 H(+) = D-ribulose 1,5-bisphosphate + CO2 + H2O. The catalysed reaction is D-ribulose 1,5-bisphosphate + O2 = 2-phosphoglycolate + (2R)-3-phosphoglycerate + 2 H(+). RuBisCO catalyzes two reactions: the carboxylation of D-ribulose 1,5-bisphosphate, the primary event in carbon dioxide fixation, as well as the oxidative fragmentation of the pentose substrate in the photorespiration process. Both reactions occur simultaneously and in competition at the same active site. This chain is Ribulose bisphosphate carboxylase large chain, found in Cornus kousa (Kousa dogwood).